The sequence spans 86 residues: Large ribosomal subunit protein bL27 (86 aa).

A disordered region spans residues 1-24 (MAHKKAMGSTENTRDSNPSYLGVK). Positions 9–19 (STENTRDSNPS) are enriched in polar residues.

Belongs to the bacterial ribosomal protein bL27 family.

This chain is Large ribosomal subunit protein bL27, found in Salinibacter ruber (strain DSM 13855 / M31).